Here is a 398-residue protein sequence, read N- to C-terminus: LIM domain-binding protein 2 (398 aa).

Disordered regions lie at residues 245–280 (PPAE…TSAY) and 354–398 (DAAN…QASQ). A compositionally biased stretch (low complexity) spans 263 to 279 (STNNASNSNAGNNATSA). The LIM interaction domain (LID) domain maps to 323-362 (DVMVVGEPTLMGGEFGDEDERLITRLENTQYDAANGMDDE).

Belongs to the LDB family. As to expression, expressed in adult brain, lung, spleen and kidney. Isoform b is generally expressed at a higher level than isoform a.

The protein resides in the nucleus. In terms of biological role, binds to the LIM domain of a wide variety of LIM domain-containing transcription factors. The chain is LIM domain-binding protein 2 from Xenopus laevis (African clawed frog).